The following is a 161-amino-acid chain: 3-isopropylmalate dehydratase small subunit (161 aa).

This sequence belongs to the LeuD family. LeuD type 2 subfamily. In terms of assembly, heterodimer of LeuC and LeuD.

The catalysed reaction is (2R,3S)-3-isopropylmalate = (2S)-2-isopropylmalate. It functions in the pathway amino-acid biosynthesis; L-leucine biosynthesis; L-leucine from 3-methyl-2-oxobutanoate: step 2/4. In terms of biological role, catalyzes the isomerization between 2-isopropylmalate and 3-isopropylmalate, via the formation of 2-isopropylmaleate. The polypeptide is 3-isopropylmalate dehydratase small subunit (Sulfolobus acidocaldarius (strain ATCC 33909 / DSM 639 / JCM 8929 / NBRC 15157 / NCIMB 11770)).